The following is a 712-amino-acid chain: Polyribonucleotide nucleotidyltransferase (712 aa).

Mg(2+) is bound by residues Asp-487 and Asp-493. Residues 554–613 (PKIITMTINPDKIRDVIGPSGKQINKIIEETGVKIDIEQDGTVFISSINQEMNDKAKKII) form the KH domain. One can recognise an S1 motif domain in the interval 623–691 (GEIYEGKVKR…KQGRVNLSRK (69 aa)).

The protein belongs to the polyribonucleotide nucleotidyltransferase family. It depends on Mg(2+) as a cofactor.

The protein localises to the cytoplasm. The catalysed reaction is RNA(n+1) + phosphate = RNA(n) + a ribonucleoside 5'-diphosphate. Its function is as follows. Involved in mRNA degradation. Catalyzes the phosphorolysis of single-stranded polyribonucleotides processively in the 3'- to 5'-direction. The chain is Polyribonucleotide nucleotidyltransferase from Bacillus cereus (strain AH820).